Here is a 372-residue protein sequence, read N- to C-terminus: GTPase Obg (372 aa).

The Obg domain maps to 1–159 (MKFIDEARIE…RMLKLELKVL (159 aa)). A disordered region spans residues 128–147 (LHFKSSTNRAPRQKTDGKPG). An OBG-type G domain is found at 160 to 334 (ADVGLLGMPN…LVYAIHDYLV (175 aa)). GTP is bound by residues 166–173 (GMPNAGKS), 191–195 (FTTLA), 213–216 (DIPG), 284–287 (NKLD), and 315–317 (SAL). Residues serine 173 and threonine 193 each coordinate Mg(2+).

The protein belongs to the TRAFAC class OBG-HflX-like GTPase superfamily. OBG GTPase family. Monomer. The cofactor is Mg(2+).

It is found in the cytoplasm. In terms of biological role, an essential GTPase which binds GTP, GDP and possibly (p)ppGpp with moderate affinity, with high nucleotide exchange rates and a fairly low GTP hydrolysis rate. Plays a role in control of the cell cycle, stress response, ribosome biogenesis and in those bacteria that undergo differentiation, in morphogenesis control. The sequence is that of GTPase Obg from Burkholderia pseudomallei (strain 668).